Consider the following 60-residue polypeptide: Defensin MGD-1 (60 aa).

4 cysteine pairs are disulfide-bonded: Cys4/Cys25, Cys10/Cys33, Cys14/Cys35, and Cys21/Cys38. A 3-hydroxytryptophan modification is found at Trp28. Cys38 bears the Cysteine amide mark. The propeptide occupies Gly39–Phe60.

The protein belongs to the invertebrate defensin family. Type 2 subfamily. Post-translationally, the hydroxylation of the Trp-28 is not important for the antibacterial activity. Abundantly expressed in hemocytes.

Its subcellular location is the secreted. Its function is as follows. Active against both Gram-positive and Gram-negative bacteria but is not cytotoxic towards human erythrocytes or protozoa. The protein is Defensin MGD-1 (FH3) of Mytilus galloprovincialis (Mediterranean mussel).